A 445-amino-acid chain; its full sequence is MTKKRIAIIGAGPSGLAQLRAFQSAAAKGAEIPEIVCFEKQDNWGGLWNYTWRTGLDQYGEPVHGSMYRYLWSNGPKEGLEFADYSFEEHFGKQIASYPPRAVLFDYIEGRVLKAGVRNLIRFSTAVRWVEKAGDKFNVTVCHLPEDRTYTEEFDHVIVCSGHFSTPNVPYFPGFENFKGRVLHAHDFRDALEFKDKDILIVGTSYSAEDIGSQCWKYGCKSVTVSHRTAPMGFNWPDNWQEVPLLQKVEGNTAYFKDGTTKDVDAVILCTGYKHHFPFLPDDLRLKTANRLATADLYKGVAFVREPALFYLGMQDQWFTFNMFDAQAWWVRDVIMGRIALPDQATMEADVIDRVTREDAGEDDYAAIWYQGDYVKELIDETDYPSFDVEGACKAFKEWKGHKKKDIMGFRNNAYKSVITGTMAPMHHTPWKDALDDSLEVYLQN.

FAD contacts are provided by serine 14, glutamate 39, glutamine 41, leucine 47, tryptophan 48, and histidine 64. The NADP(+) site is built by tryptophan 72 and asparagine 74. FAD-binding residues include asparagine 74 and valine 127. Residues threonine 204, serine 205, serine 207, and arginine 228 each coordinate NADP(+). Glutamine 317 and threonine 320 together coordinate FAD. Residue arginine 411 coordinates NADP(+).

Belongs to the FMO family. FAD serves as cofactor.

It catalyses the reaction trimethylamine + NADPH + O2 = trimethylamine N-oxide + NADP(+) + H2O. Its function is as follows. Catalyzes the oxidation of trimethylamine (TMA) to produce trimethylamine N-oxide (TMAO). In vitro, has a broad substrate specificity, oxidizing many nitrogen- and sulfur-containing compounds, including dimethylamine (DMA), dimethylsulfide (DMS) and dimethylsulfoxide (DMSO). The chain is Trimethylamine monooxygenase from Roseovarius sp. (strain 217).